The primary structure comprises 139 residues: Nucleoside diphosphate kinase (139 aa).

ATP contacts are provided by lysine 11, phenylalanine 59, arginine 87, threonine 93, arginine 104, and asparagine 114. Histidine 117 (pros-phosphohistidine intermediate) is an active-site residue.

Belongs to the NDK family. As to quaternary structure, homotetramer. Mg(2+) is required as a cofactor.

The protein localises to the cytoplasm. It carries out the reaction a 2'-deoxyribonucleoside 5'-diphosphate + ATP = a 2'-deoxyribonucleoside 5'-triphosphate + ADP. The catalysed reaction is a ribonucleoside 5'-diphosphate + ATP = a ribonucleoside 5'-triphosphate + ADP. Functionally, major role in the synthesis of nucleoside triphosphates other than ATP. The ATP gamma phosphate is transferred to the NDP beta phosphate via a ping-pong mechanism, using a phosphorylated active-site intermediate. The polypeptide is Nucleoside diphosphate kinase (Wolbachia sp. subsp. Brugia malayi (strain TRS)).